The chain runs to 486 residues: Protein DETOXIFICATION 27 (486 aa).

The segment at 1–25 (MRGGDGEEGSESRVALLKSPHTAEE) is disordered. A run of 12 helical transmembrane segments spans residues 41–61 (LWQIVGPAIFSRVTTYSMLVI), 74–94 (LAAISIVNNVTVGFNFGLLLG), 124–144 (IVLFFCCVLLLPTYIFTTPVL), 153–173 (IAELSGVVAIWVIPLHFAFTL), 189–209 (VTAYAAAVALVVHILVCWLFV), 216–236 (VVGTVATISISWWVNVLILLV), 269–289 (GVMLCLENWYYRILIIMTGNL), 299–319 (LSICMAINGWEMMIPLAFFAG), 349–369 (IIGLFFWVLIMLLHNQIAWIF), 384–404 (LLLAFTVLLNSVQPVLSGVAV), 407–427 (GWQSYVAYINLGCYYCIGVPL), and 439–461 (VMGIWGGMIFGGTAVQTMILSFI).

It belongs to the multi antimicrobial extrusion (MATE) (TC 2.A.66.1) family.

It is found in the membrane. The chain is Protein DETOXIFICATION 27 from Arabidopsis thaliana (Mouse-ear cress).